The chain runs to 228 residues: Prolactin (228 aa).

The N-terminal stretch at 1 to 29 is a signal peptide; the sequence is MGTKRSSLKGSLLLLLLMSSLFLFKSVES. A disulfide bond links Cys-33 and Cys-40. A phosphoserine mark is found at Ser-55, Ser-63, and Ser-119. Intrachain disulfides connect Cys-87-Cys-203 and Cys-220-Cys-228.

Belongs to the somatotropin/prolactin family. In terms of assembly, interacts with PRLR.

The protein localises to the secreted. In terms of biological role, prolactin acts primarily on the mammary gland by promoting lactation, mammogenesis, mitogenesis and osmoregulation. The polypeptide is Prolactin (PRL) (Trichosurus vulpecula (Brush-tailed possum)).